Reading from the N-terminus, the 638-residue chain is Acetolactate synthase 1, chloroplastic (638 aa).

Positions 1-19 are enriched in low complexity; it reads MATAAAASTALTGATTAAP. The interval 1 to 23 is disordered; it reads MATAAAASTALTGATTAAPKARR. The N-terminal 39 residues, 1-39, are a transit peptide targeting the chloroplast; it reads MATAAAASTALTGATTAAPKARRRAHLLATRRALAAPIR. A thiamine diphosphate-binding site is contributed by E112. Cysteines 132 and 278 form a disulfide. Residues R214, 320-341, and 363-382 contribute to the FAD site; these read HGTV…LGVR and DIDP…ICAD. The thiamine pyrophosphate binding stretch occupies residues 455 to 535; the sequence is QHQMWAAQYY…VKVFVLNNQH (81 aa). Mg(2+) is bound by residues D506 and N533.

Belongs to the TPP enzyme family. The cofactor is Mg(2+). It depends on thiamine diphosphate as a cofactor.

The protein resides in the plastid. It is found in the chloroplast. The catalysed reaction is 2 pyruvate + H(+) = (2S)-2-acetolactate + CO2. It functions in the pathway amino-acid biosynthesis; L-isoleucine biosynthesis; L-isoleucine from 2-oxobutanoate: step 1/4. Its pathway is amino-acid biosynthesis; L-valine biosynthesis; L-valine from pyruvate: step 1/4. This Zea mays (Maize) protein is Acetolactate synthase 1, chloroplastic (ALS1).